A 325-amino-acid polypeptide reads, in one-letter code: Protease HtpX homolog 2 (325 aa).

2 consecutive transmembrane segments (helical) span residues 17–37 and 42–62; these read IAIL…FFGF and LLIT…WLFG. Zn(2+) is bound at residue H146. E147 is an active-site residue. H150 contributes to the Zn(2+) binding site. A run of 2 helical transmembrane segments spans residues 158–178 and 195–215; these read LLLA…GLWW and ILFL…LFVL. E222 is a binding site for Zn(2+).

Belongs to the peptidase M48B family. Zn(2+) is required as a cofactor.

It is found in the cell membrane. The polypeptide is Protease HtpX homolog 2 (Sulfurisphaera tokodaii (strain DSM 16993 / JCM 10545 / NBRC 100140 / 7) (Sulfolobus tokodaii)).